The sequence spans 257 residues: uncharacterized protein (257 aa).

Residues Leu7–Thr27 form a helical membrane-spanning segment.

It belongs to the staphylococcal tandem lipoprotein family.

The protein resides in the cell membrane. This is an uncharacterized protein from Staphylococcus aureus (strain Mu50 / ATCC 700699).